Here is a 148-residue protein sequence, read N- to C-terminus: uncharacterized protein (148 aa).

The first 22 residues, 1–22 (MVQTVLNSVWLWRSVLLRLTFS), serve as a signal peptide directing secretion.

This is an uncharacterized protein from Saccharomyces cerevisiae (strain ATCC 204508 / S288c) (Baker's yeast).